Here is a 67-residue protein sequence, read N- to C-terminus: MRSKHNEMKSPIMSCSKRTEWKSILSPLIFRQQMILTQNLNQKLKTIKACMYQIRKLSKLKALYKGL.

It belongs to the rhabdoviruses C protein family.

Functionally, seems to stimulates transcription by the viral polymerase. May play a role in viral pathogenesis or transmission by insects vectors. This is Protein C' (P) from Vesicular stomatitis Indiana virus (strain 98COE North America) (VSIV).